We begin with the raw amino-acid sequence, 412 residues long: Protein translocase subunit SecY (412 aa).

9 consecutive transmembrane segments (helical) span residues isoleucine 17–glycine 37, isoleucine 58–isoleucine 78, alanine 117–phenylalanine 137, phenylalanine 143–glutamate 163, isoleucine 170–isoleucine 190, valine 251–isoleucine 271, tyrosine 293–isoleucine 313, threonine 350–isoleucine 370, and serine 372–isoleucine 392.

It belongs to the SecY/SEC61-alpha family. As to quaternary structure, component of the plastid Sec protein translocase complex, which is composed of at least SecY and SecE.

It is found in the plastid. The protein resides in the chloroplast thylakoid membrane. In terms of biological role, the central subunit of the protein translocation channel SecYE. Consists of two halves formed by TMs 1-5 and 6-10. These two domains form a lateral gate at the front which open onto the bilayer between TMs 2 and 7, and are clamped together by SecE at the back. The channel is closed by both a pore ring composed of hydrophobic SecY resides and a short helix (helix 2A) on the extracellular side of the membrane which forms a plug. The polypeptide is Protein translocase subunit SecY (Pyrenomonas salina).